The primary structure comprises 465 residues: MAPVSNQAGGHVAVLAFPFSTHAAPLLNIVCRLAAAAPSTLFSFFNTKQSNSSILASDTSVLRYTNVCVCEVADGVPEGYVFVGKPQEDIELFMKAAPDNFRKCLEASVAESGREVSCLVTDAFFWFGAHMADDMGGVPWVPFWTAGPASLSAHVHTDLIRNTTSGDCHDEKETITVIAGMSKVRPQDLPEGIIFGNLESLFSRMLHQMGLMLPLATAVFINSFEELDPVITNDLKSKFKRFLNVGPLDLLEPTASAATTTPQTAEAVAGDGCLSWLDKQKAASVVYVSFGSVTRPSPEELMALAEALEASRVPFLWSLRDNLKNPQLDEFLSKGKLNGMVVPWAPQPQVLAHGSVGAFVTHCGWNSVLESVAGGVPLICRPFFGDQKLNARMVEDVWKIGLRLEGGVFTKNGMLKSLDMLLSQDKGTKMKNKIHTLKQLAQQAVEPKGSSTRNFESLLEMATTN.

Histidine 22 functions as the Proton acceptor in the catalytic mechanism. An anthocyanidin is bound by residues histidine 22 and glutamine 87. Aspartate 122 (charge relay) is an active-site residue. Position 145 (threonine 145) interacts with UDP-alpha-D-glucose. Histidine 154 serves as a coordination point for an anthocyanidin. Residues alanine 345, glutamine 347, histidine 362, tryptophan 365, asparagine 366, serine 367, and glutamate 370 each coordinate UDP-alpha-D-glucose. Glycine 385 is a binding site for an anthocyanidin. 2 residues coordinate UDP-alpha-D-glucose: aspartate 386 and glutamine 387.

Belongs to the UDP-glycosyltransferase family. As to expression, highest expression detected in fruit, with very low levels detected in petal and leaf.

It catalyses the reaction an anthocyanidin + UDP-alpha-D-glucose + H(+) = an anthocyanidin 3-O-beta-D-glucoside + UDP. The enzyme catalyses pelargonidin + UDP-alpha-D-glucose = pelargonidin 3-O-beta-D-glucoside + UDP. It carries out the reaction cyanidin + UDP-alpha-D-glucose = cyanidin 3-O-beta-D-glucoside + UDP + H(+). Its pathway is pigment biosynthesis; anthocyanin biosynthesis. In the presence of other necessary color factors, this glycosylation reaction allows the accumulation of anthocyanin pigments. Anthocyanidins are the preferred substrates, while flavonols are only a minor substrate in vitro. The protein is Anthocyanidin 3-O-glucosyltransferase 2 of Fragaria ananassa (Strawberry).